Reading from the N-terminus, the 840-residue chain is MSVVGIDLGFQSCYVAVARAGGIETIANEYSDRCTPACISFGPKNRSIGAAAKSQVISNAKNTVQGFKRFHGRAFSDPFVEAEKSNLAYDIVQLPTGLTGIKVTYMEEERNFTTEQVTAMLLSKLKETAESVLKKPVVDCVVSVPCFYTDAERRSVMDATQIAGLNCLRLMNETTAVALAYGIYKQDLPALEEKPRNVVFVDMGHSAYQVSVCAFNRGKLKVLATAFDTTLGGRKFDEVLVNHFCEEFGKKYKLDIKSKIRALLRLSQECEKLKKLMSANASDLPLSIECFMNDVDVSGTMNRGKFLEMCNDLLARVEPPLRSVLEQTKLKKEDIYAVEIVGGATRIPAVKEKISKFFGKELSTTLNADEAVTRGCALQCAILSPAFKVREFSITDVVPYPISLRWNSPAEEGSSDCEVFSKNHAAPFSKVLTFYRKEPFTLEAYYSSPQDLPYPDPAIAQFSVQKVTPQSDGSSSKVKVKVRVNVHGIFSVSSASLVEVHKSEENEEPMETDQNAKEEEKMQVDQEEPHVEEQQQQTPAENKAESEEMETSQAGSKDKKMDQPPQAKKAKVKTSTVDLPIENQLLWQIDREMLNLYIENEGKMIMQDKLEKERNDAKNAVEEYVYEMRDKLSGEYEKFVSEDDRNSFTLKLEDTENWLYEDGEDQPKQVYVDKLAELKNLGQPIKIRFQESEERPKLFEELGKQIQQYMKIISSFKNKEDQYDHLDAADMTKVEKSTNEAMEWMNNKLNLQNKQSLTMDPVVKSKEIEAKIKELTSTCSPIISKPKPKVEPPKEEQKNAEQNGPVDGQGDNPGPQAAEQGTDTAVPSDSDKKLPEMDID.

Position 53 is an N6-acetyllysine (Lys53). Ser76 bears the Phosphoserine mark. Phosphotyrosine is present on residues Tyr89 and Tyr336. Residues Ser393 and Ser415 each carry the phosphoserine modification. An N6-acetyllysine modification is found at Lys430. The segment at 500–575 is disordered; that stretch reads VHKSEENEEP…QAKKAKVKTS (76 aa). A compositionally biased stretch (basic and acidic residues) spans 514–533; that stretch reads QNAKEEEKMQVDQEEPHVEE. Phosphothreonine is present on Thr538. A phosphoserine mark is found at Ser546 and Ser647. At Tyr660 the chain carries Phosphotyrosine. Lys679 is subject to N6-acetyllysine. Phosphoserine is present on Ser756. The residue at position 773 (Lys773) is an N6-methyllysine. Residues 779-840 form a disordered region; that stretch reads CSPIISKPKP…DKKLPEMDID (62 aa). Basic and acidic residues-rich tracts occupy residues 788–799 and 829–840; these read PKVEPPKEEQKN and DSDKKLPEMDID.

The protein belongs to the heat shock protein 70 family. As to quaternary structure, interacts with TJP1/ZO-1.

Its subcellular location is the cytoplasm. This is Heat shock 70 kDa protein 4 (HSPA4) from Homo sapiens (Human).